The chain runs to 678 residues: Probable 3',5'-cyclic phosphodiesterase pde-3 (678 aa).

3 disordered regions span residues 1-27 (MSPG…FQPT), 52-95 (AEMR…VLGG), and 223-250 (TVPA…NEHE). A compositionally biased stretch (low complexity) spans 7-19 (AVGGVSPPVMVPG). Polar residues-rich tracts occupy residues 60 to 85 (TATS…NSGV) and 231 to 246 (ARSS…PSNN). The 352-residue stretch at 281 to 632 (RYDTRELDTD…RKWKEQIELE (352 aa)) folds into the PDEase domain. His356 (proton donor) is an active-site residue. A divalent metal cation is bound by residues His360, His421, Asp422, and Asp531. The interval 654-678 (EEESASTSDSPDPRRDSPLDSDLSQ) is disordered.

It belongs to the cyclic nucleotide phosphodiesterase family. A divalent metal cation is required as a cofactor.

The enzyme catalyses a nucleoside 3',5'-cyclic phosphate + H2O = a nucleoside 5'-phosphate + H(+). The sequence is that of Probable 3',5'-cyclic phosphodiesterase pde-3 (pde-3) from Caenorhabditis elegans.